The following is a 251-amino-acid chain: 5'-nucleotidase SurE (251 aa).

The a divalent metal cation site is built by Asp8, Asp9, Ser40, and Asn95.

It belongs to the SurE nucleotidase family. Requires a divalent metal cation as cofactor.

The protein resides in the cytoplasm. It carries out the reaction a ribonucleoside 5'-phosphate + H2O = a ribonucleoside + phosphate. In terms of biological role, nucleotidase that shows phosphatase activity on nucleoside 5'-monophosphates. The protein is 5'-nucleotidase SurE of Maridesulfovibrio salexigens (strain ATCC 14822 / DSM 2638 / NCIMB 8403 / VKM B-1763) (Desulfovibrio salexigens).